A 246-amino-acid chain; its full sequence is Deoxycytidylate 5-hydroxymethyltransferase (246 aa).

Cys148 is a catalytic residue.

The protein belongs to the thymidylate synthase family.

The catalysed reaction is dCMP + (6R)-5,10-methylene-5,6,7,8-tetrahydrofolate + H2O = 5-hydroxymethyl-dCMP + (6S)-5,6,7,8-tetrahydrofolate. The polypeptide is Deoxycytidylate 5-hydroxymethyltransferase (42) (Enterobacteria phage T6 (Bacteriophage T6)).